The following is a 289-amino-acid chain: D-xylonolactone lactonase (289 aa).

Glu-17 contacts Fe(2+). The D-xylono-1,5-lactone site is built by Arg-98, Asn-100, Glu-119, and Asn-145. Fe(2+)-binding residues include Asn-145 and Asp-195. Asp-195 functions as the Proton donor/acceptor in the catalytic mechanism.

Belongs to the SMP-30/CGR1 family. The cofactor is Fe(2+).

The enzyme catalyses D-xylono-1,5-lactone + H2O = D-xylonate + H(+). In terms of biological role, involved in the degradation of D-xylose. Catalyzes the hydrolysis of D-xylonolactone to D-xylonate. The protein is D-xylonolactone lactonase of Caulobacter vibrioides (strain ATCC 19089 / CIP 103742 / CB 15) (Caulobacter crescentus).